The primary structure comprises 144 residues: Large ribosomal subunit protein uL13 (144 aa).

This sequence belongs to the universal ribosomal protein uL13 family. Part of the 50S ribosomal subunit.

In terms of biological role, this protein is one of the early assembly proteins of the 50S ribosomal subunit, although it is not seen to bind rRNA by itself. It is important during the early stages of 50S assembly. The polypeptide is Large ribosomal subunit protein uL13 (Clostridium novyi (strain NT)).